Consider the following 443-residue polypeptide: Methionine aminopeptidase 2-1 (443 aa).

The disordered stretch occupies residues 1–90 (MAAQADDELN…RVPVSELFPN (90 aa)). The segment covering 33 to 48 (ADNDDSEDDEKEEEGG) has biased composition (acidic residues). Residues 58–73 (KKKKKRKPKKKKKGGA) show a composition bias toward basic residues. Histidine 196 is a substrate binding site. The a divalent metal cation site is built by aspartate 216, aspartate 227, and histidine 296. Substrate is bound at residue histidine 304. A divalent metal cation contacts are provided by glutamate 329 and glutamate 424.

Belongs to the peptidase M24A family. Methionine aminopeptidase eukaryotic type 2 subfamily. The cofactor is Co(2+). Requires Zn(2+) as cofactor. Mn(2+) is required as a cofactor. It depends on Fe(2+) as a cofactor.

It localises to the cytoplasm. It catalyses the reaction Release of N-terminal amino acids, preferentially methionine, from peptides and arylamides.. Cotranslationally removes the N-terminal methionine from nascent proteins. The N-terminal methionine is often cleaved when the second residue in the primary sequence is small and uncharged (Met-Ala-, Cys, Gly, Pro, Ser, Thr, or Val). The protein is Methionine aminopeptidase 2-1 of Talaromyces stipitatus (strain ATCC 10500 / CBS 375.48 / QM 6759 / NRRL 1006) (Penicillium stipitatum).